The chain runs to 121 residues: Large ribosomal subunit protein uL14 (121 aa).

It belongs to the universal ribosomal protein uL14 family. As to quaternary structure, part of the 50S ribosomal subunit. Forms a cluster with proteins L3 and L19. In the 70S ribosome, L14 and L19 interact and together make contacts with the 16S rRNA in bridges B5 and B8.

Binds to 23S rRNA. Forms part of two intersubunit bridges in the 70S ribosome. This Azobacteroides pseudotrichonymphae genomovar. CFP2 protein is Large ribosomal subunit protein uL14.